The sequence spans 369 residues: Peridinin-chlorophyll a-binding protein 2, chloroplastic (369 aa).

Residues 1-56 constitute a chloroplast transit peptide; the sequence is MVRSGKKAVVLATVAFCATSVVQKTCGFVPSPLRQRAAAAGAAASVATMFAPAAFA. Tandem repeats lie at residues 57-219 and 220-369.

In terms of assembly, homotrimer.

It localises to the plastid. The protein localises to the chloroplast. In terms of biological role, water-soluble antenna for capture of solar energy in the blue-green range. Peridinin is an asymmetric carotenoid. The protein is Peridinin-chlorophyll a-binding protein 2, chloroplastic of Amphidinium carterae (Dinoflagellate).